Reading from the N-terminus, the 72-residue chain is Translation initiation factor IF-1 (72 aa).

The S1-like domain maps to 1–72; that stretch reads MAKEDSIEMQ…TKGRIVFRAR (72 aa).

The protein belongs to the IF-1 family. Component of the 30S ribosomal translation pre-initiation complex which assembles on the 30S ribosome in the order IF-2 and IF-3, IF-1 and N-formylmethionyl-tRNA(fMet); mRNA recruitment can occur at any time during PIC assembly.

The protein localises to the cytoplasm. Functionally, one of the essential components for the initiation of protein synthesis. Stabilizes the binding of IF-2 and IF-3 on the 30S subunit to which N-formylmethionyl-tRNA(fMet) subsequently binds. Helps modulate mRNA selection, yielding the 30S pre-initiation complex (PIC). Upon addition of the 50S ribosomal subunit IF-1, IF-2 and IF-3 are released leaving the mature 70S translation initiation complex. In Idiomarina loihiensis (strain ATCC BAA-735 / DSM 15497 / L2-TR), this protein is Translation initiation factor IF-1.